Reading from the N-terminus, the 360-residue chain is Phospho-N-acetylmuramoyl-pentapeptide-transferase (360 aa).

A run of 10 helical transmembrane segments spans residues 27 to 47, 70 to 90, 98 to 118, 134 to 154, 168 to 188, 199 to 219, 239 to 259, 263 to 283, 288 to 308, and 337 to 357; these read GALFTAGFFVFWFGPWIISLL, GTPTMGGLMILAGAVVSILLW, VWVTLAVTLGFGAIGFYDDYL, LLLEFAIAGAACLMISLYSPA, TLLNLGWFWVPFAAFVIVGAG, GLAIVPVMIACATFGIIAYLV, LAVVCGAVIGAGLGFLWFNAP, IFMGDTGSLALGGLLGSIAVA, IVLAIVGGLFVLEIMSVIIQV, and QVVIRFWIIAVILALVGLATL.

It belongs to the glycosyltransferase 4 family. MraY subfamily. Mg(2+) serves as cofactor.

The protein resides in the cell inner membrane. The enzyme catalyses UDP-N-acetyl-alpha-D-muramoyl-L-alanyl-gamma-D-glutamyl-meso-2,6-diaminopimeloyl-D-alanyl-D-alanine + di-trans,octa-cis-undecaprenyl phosphate = di-trans,octa-cis-undecaprenyl diphospho-N-acetyl-alpha-D-muramoyl-L-alanyl-D-glutamyl-meso-2,6-diaminopimeloyl-D-alanyl-D-alanine + UMP. It functions in the pathway cell wall biogenesis; peptidoglycan biosynthesis. In terms of biological role, catalyzes the initial step of the lipid cycle reactions in the biosynthesis of the cell wall peptidoglycan: transfers peptidoglycan precursor phospho-MurNAc-pentapeptide from UDP-MurNAc-pentapeptide onto the lipid carrier undecaprenyl phosphate, yielding undecaprenyl-pyrophosphoryl-MurNAc-pentapeptide, known as lipid I. The polypeptide is Phospho-N-acetylmuramoyl-pentapeptide-transferase (Methylorubrum extorquens (strain CM4 / NCIMB 13688) (Methylobacterium extorquens)).